Here is a 437-residue protein sequence, read N- to C-terminus: Pterin deaminase (437 aa).

Positions 80 and 82 each coordinate a divalent metal cation. Residue lysine 85 participates in substrate binding. Histidine 231 contacts a divalent metal cation. The Proton donor role is filled by glutamate 234. Aspartate 331 serves as a coordination point for a divalent metal cation. A substrate-binding site is contributed by 331 to 332; that stretch reads DN.

The protein belongs to the metallo-dependent hydrolases superfamily. Pterin deaminase family. Requires a divalent metal cation as cofactor.

The catalysed reaction is a 2-amino-4-hydroxypteridine + H2O + H(+) = a 2,4-dihydroxypteridine + NH4(+). It catalyses the reaction L-sepiapterin + H2O + H(+) = (S)-xanthopterin-B2 + NH4(+). In terms of biological role, catalyzes the deamination of many pterin metabolites, such as formylpterin, pterin-6-carboxylate, pterin-7-carboxylate, pterin, hydroxymethylpterin, biopterin, D-(+)-neopterin, isoxanthopterin, sepiapterin, folate, xanthopterin, and 7,8-dihydrohydroxymethylpterin. May be involved in a degradative pathway for catabolizing pterin rings. The chain is Pterin deaminase from Rhizobium rhizogenes (strain K84 / ATCC BAA-868) (Agrobacterium radiobacter).